Consider the following 320-residue polypeptide: F-box protein At2g02240 (320 aa).

Positions 58–104 (TSPFDVLPEDCISNIISFTSPRDACVAASVSKTFESAVSSDCVWDKF) constitute an F-box domain.

The chain is F-box protein At2g02240 from Arabidopsis thaliana (Mouse-ear cress).